Reading from the N-terminus, the 38-residue chain is Exendin-1 (38 aa).

The O-linked (HexNAc...) serine; in Exendin-1 and Exendin-1b glycan is linked to serine 32.

It belongs to the glucagon family. Post-translationally, O-linked glycan consists of Hex-HexNAc saccharide. Glycosylation may be of interest for the biological stability of exendin-1 and exendin-1b. Expressed by the venom gland.

It is found in the secreted. In terms of biological role, O-linked and free exendin-1 and exendin-1b have vasoactive intestinal peptide(VIP)/secretin-like biological activities. They interact with rat and human VIP receptors 1 (VIPR1) and 2 (VIPR2), with the highest affinity for the human VIPR2. They induce hypotension that is mediated by relaxation of cardiac smooth muscle. This chain is Exendin-1, found in Heloderma horridum horridum (Mexican beaded lizard).